The following is a 398-amino-acid chain: Inner membrane protein YjgN (398 aa).

The Cytoplasmic portion of the chain corresponds to 1 to 24 (MAQVINEMDVPSHSFVFHGTGERY). Residues 25-45 (FLICVVNVLLTIITLGIYLPW) form a helical membrane-spanning segment. The Periplasmic segment spans residues 46-73 (ALMKCKRYLYANMEVNGQRFSYGITGGN). Residues 74–94 (VFFSCLVFVFFYFAILMTVSA) form a helical membrane-spanning segment. Residue Asp95 is a topological domain, cytoplasmic. The helical transmembrane segment at 96 to 116 (MPLIGCVLTLSLLVLLIFMAA) threads the bilayer. Residues 117 to 142 (KGLRYQALMTSLNGVRFSFNCSMKGV) lie on the Periplasmic side of the membrane. The chain crosses the membrane as a helical span at residues 143–163 (WWVTFFLPILMAIGMGTVFFI). At 164 to 175 (STKMLHANSSSS) the chain is on the cytoplasmic side. The chain crosses the membrane as a helical span at residues 176-196 (VIVSVVLMAIVGIVSIGIFNG). At 197–228 (TLYSLVMSFLWSNTSFGIHRFKVKLDTAYCIK) the chain is on the periplasmic side. Residues 229 to 249 (YAILAFLALLPFLAVAGYIIF) traverse the membrane as a helical segment. Residues 250–278 (DQILNAYDSSVYANDDIENLQQFMEMQRK) are Cytoplasmic-facing. Residues 279–299 (MIIAQLIYYFGIAVSTSYLTV) traverse the membrane as a helical segment. At 300 to 333 (SLRNHFMSNLSLNDGRIRFRSTLTYHGMLYRMCA) the chain is on the periplasmic side. Residues 334–354 (LVVISGITGGLAYPLLKIWMI) form a helical membrane-spanning segment. At 355–398 (DWQAKNTYLLGDLDDLPLINKEEQPDKGFLASISRGIMPSLPFL) the chain is on the cytoplasmic side.

The protein resides in the cell inner membrane. This is Inner membrane protein YjgN (yjgN) from Escherichia coli O157:H7.